We begin with the raw amino-acid sequence, 240 residues long: Orotidine 5'-phosphate decarboxylase (240 aa).

Substrate is bound by residues Asp15, Lys37, 64–73 (DLKYHDIPNT), Thr127, Arg188, Gln197, Gly217, and Arg218. The Proton donor role is filled by Lys66.

It belongs to the OMP decarboxylase family. Type 1 subfamily. Homodimer.

The catalysed reaction is orotidine 5'-phosphate + H(+) = UMP + CO2. It functions in the pathway pyrimidine metabolism; UMP biosynthesis via de novo pathway; UMP from orotate: step 2/2. Catalyzes the decarboxylation of orotidine 5'-monophosphate (OMP) to uridine 5'-monophosphate (UMP). In Citrifermentans bemidjiense (strain ATCC BAA-1014 / DSM 16622 / JCM 12645 / Bem) (Geobacter bemidjiensis), this protein is Orotidine 5'-phosphate decarboxylase.